Reading from the N-terminus, the 342-residue chain is MKIVFFGTPEFAVPTLEKLLINPEFDVLAVITQPDKRRERGNKLTPSPVKNVAMSYSQWENIAHDLPVWQPERIKKDTETLNRLKELDVDAFVVVAYGQILPQKILNIPKLGSVNVHGSILPQYRGAAPIQWCLYNGETETGITTMLMDVGMDTGAMLLKATTPIGLLDNADDVAQKLSVIGGDLLIETLHKLQQKEIQPIPQDNAAATYASLIQKQDYGLDWSRSALQLHNQIRGFYPNCITTFRNQPLKITASFPLGAAYREELPPELQKMLQKLPDLSQISGSPGEVVSITKGVGAIAQTGEGLLLLREVQLPGKRPQSGWDFVNGTRLTVGEVLGNGS.

Ser119 to Pro122 is a binding site for (6S)-5,6,7,8-tetrahydrofolate.

Belongs to the Fmt family.

It carries out the reaction L-methionyl-tRNA(fMet) + (6R)-10-formyltetrahydrofolate = N-formyl-L-methionyl-tRNA(fMet) + (6S)-5,6,7,8-tetrahydrofolate + H(+). Functionally, attaches a formyl group to the free amino group of methionyl-tRNA(fMet). The formyl group appears to play a dual role in the initiator identity of N-formylmethionyl-tRNA by promoting its recognition by IF2 and preventing the misappropriation of this tRNA by the elongation apparatus. This is Methionyl-tRNA formyltransferase from Nostoc sp. (strain PCC 7120 / SAG 25.82 / UTEX 2576).